The chain runs to 179 residues: MLSLEKGQSLSLTKPDGSSIQKVRVGLSWDVASIGSNVDLDLFVVHKESKKVAFFNDKTAISGIKLSDDNLTGEGEGDDEFTELDATKTDDGDYYICVNIYDAKSRKQAFNLVNNAKATIYNNETNTALASYSITEDGGQNTGIIVAKLKDVGGSYEFTALGEYIVGDINEIAQVVFRK.

Belongs to the CAPAB/TerDEXZ family.

This is an uncharacterized protein from Synechocystis sp. (strain ATCC 27184 / PCC 6803 / Kazusa).